The following is a 1242-amino-acid chain: von Willebrand factor A domain-containing protein 5B2 (1242 aa).

The 138-residue stretch at 1 to 138 (MPGLYCPSSW…TMTVTLHSSR (138 aa)) folds into the VIT domain. Residues 354 to 527 (ELLFLLDSSS…KALEPALSDI (174 aa)) form the VWFA domain. Disordered regions lie at residues 569–650 (SRPP…SDTA), 670–726 (CSAS…CPLP), 751–794 (LAGR…GQGL), 957–976 (CSSE…SHLD), 987–1055 (KGLQ…GSDH), and 1118–1159 (QGDS…GLGG). Low complexity predominate over residues 588–604 (PSPEEAPSAASPGTEPT). The span at 605–619 (GTSEPLGTGTVSAEL) shows a compositional bias: polar residues. Residues 681–700 (TGSSESPGSQGPGSPEGSAP) are compositionally biased toward low complexity. The segment covering 1125–1138 (SCSPSPSSGSEGPG) has biased composition (low complexity).

In Homo sapiens (Human), this protein is von Willebrand factor A domain-containing protein 5B2 (VWA5B2).